Reading from the N-terminus, the 150-residue chain is 3-hydroxyacyl-[acyl-carrier-protein] dehydratase FabZ (150 aa).

Residue His51 is part of the active site.

This sequence belongs to the thioester dehydratase family. FabZ subfamily.

Its subcellular location is the cytoplasm. It carries out the reaction a (3R)-hydroxyacyl-[ACP] = a (2E)-enoyl-[ACP] + H2O. Involved in unsaturated fatty acids biosynthesis. Catalyzes the dehydration of short chain beta-hydroxyacyl-ACPs and long chain saturated and unsaturated beta-hydroxyacyl-ACPs. The chain is 3-hydroxyacyl-[acyl-carrier-protein] dehydratase FabZ from Legionella pneumophila (strain Lens).